The following is a 568-amino-acid chain: Involucrin (568 aa).

Disordered regions lie at residues 23–499 (CSPA…EKEL) and 517–568 (RKKH…HEVQ). Low complexity predominate over residues 25–36 (PAQTQQEQTKQP). Basic and acidic residues predominate over residues 49–77 (TQEKGFPKHEEKEANPVKDLPEQESEHHQ). Residues 78–88 (QPGPQKQQLQV) are compositionally biased toward low complexity. Over residues 89–106 (KKPEQELQEQELHSEKQP) the composition is skewed to basic and acidic residues. Low complexity-rich tracts occupy residues 107–121 (QEPQ…QQQR), 133–154 (HQQP…QDVL), and 172–181 (PELPLGQQQK). Positions 193-213 (KQQKLHLVERHQEPQEQELHH) are enriched in basic and acidic residues. The span at 217–232 (QKQQQPQEQELQLVQH) shows a compositional bias: low complexity. 2 stretches are compositionally biased toward basic and acidic residues: residues 266–333 (ESHE…HQET) and 345–456 (KPHE…HLGK). The span at 457–467 (QQEQQIEYEGY) shows a compositional bias: low complexity. The residue at position 472 (Ser-472) is a Phosphoserine. Basic and acidic residues-rich tracts occupy residues 478–499 (KQEK…EKEL), 517–532 (RKKH…EKQI), and 551–568 (VKED…HEVQ).

This sequence belongs to the involucrin family. In terms of assembly, directly or indirectly cross-linked to cornifelin (CNFN). Substrate of transglutaminase. Specific glutamines or lysines are cross-linked to keratins, desmoplakin and to inter involucrin molecules. In terms of tissue distribution, keratinocytes of epidermis and other stratified squamous epithelia.

It localises to the cytoplasm. Part of the insoluble cornified cell envelope (CE) of stratified squamous epithelia. The sequence is that of Involucrin (Ivl) from Rattus norvegicus (Rat).